Consider the following 299-residue polypeptide: Protease HtpX homolog (299 aa).

The next 2 helical transmembrane spans lie at 19 to 39 (LFIV…VWYF) and 41 to 61 (WGIT…WIAY). H146 contributes to the Zn(2+) binding site. E147 is an active-site residue. H150 provides a ligand contact to Zn(2+). 2 consecutive transmembrane segments (helical) span residues 156–176 (ILLM…RDVF) and 198–218 (IILL…VLII). Residue E227 participates in Zn(2+) binding.

It belongs to the peptidase M48B family. Zn(2+) serves as cofactor.

The protein localises to the cell membrane. The protein is Protease HtpX homolog of Caldanaerobacter subterraneus subsp. tengcongensis (strain DSM 15242 / JCM 11007 / NBRC 100824 / MB4) (Thermoanaerobacter tengcongensis).